The sequence spans 71 residues: Translation initiation factor IF-1 (71 aa).

In terms of domain architecture, S1-like spans 1–71; the sequence is MAKDAIKLRA…TKGRITYRHK (71 aa).

It belongs to the IF-1 family. As to quaternary structure, component of the 30S ribosomal translation pre-initiation complex which assembles on the 30S ribosome in the order IF-2 and IF-3, IF-1 and N-formylmethionyl-tRNA(fMet); mRNA recruitment can occur at any time during PIC assembly.

The protein resides in the cytoplasm. One of the essential components for the initiation of protein synthesis. Stabilizes the binding of IF-2 and IF-3 on the 30S subunit to which N-formylmethionyl-tRNA(fMet) subsequently binds. Helps modulate mRNA selection, yielding the 30S pre-initiation complex (PIC). Upon addition of the 50S ribosomal subunit IF-1, IF-2 and IF-3 are released leaving the mature 70S translation initiation complex. In Mycoplasmopsis synoviae (strain 53) (Mycoplasma synoviae), this protein is Translation initiation factor IF-1.